A 374-amino-acid polypeptide reads, in one-letter code: Agmatine deiminase (374 aa).

The agmatine site is built by D220 and D226. C366 acts as the Amidino-cysteine intermediate in catalysis.

The protein belongs to the agmatine deiminase family. As to quaternary structure, forms homodimers.

The catalysed reaction is agmatine + H2O = N-carbamoylputrescine + NH4(+). It participates in amine and polyamine biosynthesis; putrescine biosynthesis via agmatine pathway; N-carbamoylputrescine from agmatine: step 1/1. Functionally, mediates the hydrolysis of agmatine into N-carbamoylputrescine in the arginine decarboxylase (ADC) pathway of putrescine biosynthesis, a basic polyamine. This Medicago truncatula (Barrel medic) protein is Agmatine deiminase.